The sequence spans 67 residues: Large ribosomal subunit protein bL35 (67 aa).

The protein belongs to the bacterial ribosomal protein bL35 family.

The polypeptide is Large ribosomal subunit protein bL35 (Dehalococcoides mccartyi (strain ATCC BAA-2266 / KCTC 15142 / 195) (Dehalococcoides ethenogenes (strain 195))).